The sequence spans 209 residues: Thymidylate kinase (209 aa).

Position 11-18 (11-18 (GPDGAGKT)) interacts with ATP.

It belongs to the thymidylate kinase family.

It catalyses the reaction dTMP + ATP = dTDP + ADP. Phosphorylation of dTMP to form dTDP in both de novo and salvage pathways of dTTP synthesis. This Streptococcus thermophilus (strain ATCC BAA-250 / LMG 18311) protein is Thymidylate kinase.